Here is a 200-residue protein sequence, read N- to C-terminus: GTP-binding protein rho5 (200 aa).

13-20 (GDGACGKT) contributes to the GTP binding site. Residues 35–43 (YVPTVFENY) carry the Effector region motif. GTP contacts are provided by residues 60–64 (DTAGQ) and 118–121 (CKVD). Cysteine 197 carries the post-translational modification Cysteine methyl ester. Cysteine 197 carries the S-geranylgeranyl cysteine lipid modification. Residues 198–200 (ILL) constitute a propeptide, removed in mature form.

It belongs to the small GTPase superfamily. Rho family.

The protein localises to the cell membrane. The protein is GTP-binding protein rho5 (rho5) of Schizosaccharomyces pombe (strain 972 / ATCC 24843) (Fission yeast).